Here is a 617-residue protein sequence, read N- to C-terminus: Leucine aminopeptidase 2 (617 aa).

A peptide contacts are provided by residues 139-141 and 271-276; these read QCQ and PYGGME. A Zn(2+)-binding site is contributed by histidine 300. Residue glutamate 301 is the Proton acceptor of the active site. Histidine 304 and glutamate 323 together coordinate Zn(2+). Tyrosine 388 functions as the Proton donor in the catalytic mechanism.

This sequence belongs to the peptidase M1 family. Zn(2+) serves as cofactor.

The protein resides in the cytoplasm. The protein localises to the nucleus. It catalyses the reaction an epoxide + H2O = an ethanediol. In terms of biological role, aminopeptidase that preferentially cleaves di- and tripeptides. Also has low epoxide hydrolase activity (in vitro). Can hydrolyze the epoxide leukotriene LTA(4) but it forms preferentially 5,6-dihydroxy-7,9,11,14-eicosatetraenoic acid rather than the cytokine leukotriene B(4) as the product compared to the homologous mammalian enzyme (in vitro). The protein is Leucine aminopeptidase 2 of Aspergillus terreus (strain NIH 2624 / FGSC A1156).